A 66-amino-acid chain; its full sequence is Large ribosomal subunit protein bL35 (66 aa).

Basic residues-rich tracts occupy residues 1-15 (MPKL…KRFK) and 24-40 (HAQR…TKKQ). Positions 1 to 40 (MPKLKTKSGAKKRFKVTGTGKVMHAQRGKRHGMIKRTKKQ) are disordered.

Belongs to the bacterial ribosomal protein bL35 family.

This chain is Large ribosomal subunit protein bL35, found in Bradyrhizobium sp. (strain ORS 278).